The primary structure comprises 490 residues: Protein nucleotidyltransferase YdiU (490 aa).

ATP-binding residues include glycine 94, glycine 96, arginine 97, lysine 117, aspartate 129, glycine 130, arginine 180, and arginine 187. Aspartate 256 acts as the Proton acceptor in catalysis. Residues asparagine 257 and aspartate 266 each coordinate Mg(2+). Residue aspartate 266 participates in ATP binding.

The protein belongs to the SELO family. Mg(2+) serves as cofactor. Requires Mn(2+) as cofactor.

The catalysed reaction is L-seryl-[protein] + ATP = 3-O-(5'-adenylyl)-L-seryl-[protein] + diphosphate. The enzyme catalyses L-threonyl-[protein] + ATP = 3-O-(5'-adenylyl)-L-threonyl-[protein] + diphosphate. It carries out the reaction L-tyrosyl-[protein] + ATP = O-(5'-adenylyl)-L-tyrosyl-[protein] + diphosphate. It catalyses the reaction L-histidyl-[protein] + UTP = N(tele)-(5'-uridylyl)-L-histidyl-[protein] + diphosphate. The catalysed reaction is L-seryl-[protein] + UTP = O-(5'-uridylyl)-L-seryl-[protein] + diphosphate. The enzyme catalyses L-tyrosyl-[protein] + UTP = O-(5'-uridylyl)-L-tyrosyl-[protein] + diphosphate. Nucleotidyltransferase involved in the post-translational modification of proteins. It can catalyze the addition of adenosine monophosphate (AMP) or uridine monophosphate (UMP) to a protein, resulting in modifications known as AMPylation and UMPylation. This is Protein nucleotidyltransferase YdiU from Clostridium beijerinckii (strain ATCC 51743 / NCIMB 8052) (Clostridium acetobutylicum).